A 349-amino-acid chain; its full sequence is Isopentenyl-diphosphate delta-isomerase (349 aa).

8 to 9 (RK) contributes to the substrate binding site. FMN-binding positions include S66, 67-69 (SMT), S97, and N125. 97–99 (STR) contributes to the substrate binding site. Q160 is a substrate binding site. E161 is a Mg(2+) binding site. Residues K192, T222, 272–274 (GMK), and 293–294 (AR) contribute to the FMN site.

This sequence belongs to the IPP isomerase type 2 family. Homooctamer. Dimer of tetramers. FMN serves as cofactor. Requires NADPH as cofactor. It depends on Mg(2+) as a cofactor.

The protein resides in the cytoplasm. The enzyme catalyses isopentenyl diphosphate = dimethylallyl diphosphate. Involved in the biosynthesis of isoprenoids. Catalyzes the 1,3-allylic rearrangement of the homoallylic substrate isopentenyl (IPP) to its allylic isomer, dimethylallyl diphosphate (DMAPP). This Oceanobacillus iheyensis (strain DSM 14371 / CIP 107618 / JCM 11309 / KCTC 3954 / HTE831) protein is Isopentenyl-diphosphate delta-isomerase.